Here is an 88-residue protein sequence, read N- to C-terminus: Cell division topological specificity factor (88 aa).

Belongs to the MinE family.

Its function is as follows. Prevents the cell division inhibition by proteins MinC and MinD at internal division sites while permitting inhibition at polar sites. This ensures cell division at the proper site by restricting the formation of a division septum at the midpoint of the long axis of the cell. This is Cell division topological specificity factor from Psychromonas ingrahamii (strain DSM 17664 / CCUG 51855 / 37).